A 443-amino-acid polypeptide reads, in one-letter code: CBL-interacting protein kinase 2 (443 aa).

Residues 13–267 enclose the Protein kinase domain; that stretch reads YEMGKLLGQG…MDKIMENPWF (255 aa). Residues 19-27 and Lys42 contribute to the ATP site; that span reads LGQGTFAKV. Residue Asp135 is the Proton acceptor of the active site. Positions 153–182 are activation loop; it reads DFGLSALADCKRQDGLLHTTCGTPAYVAPE. In terms of domain architecture, NAF spans 302-329; it reads TLEKKPSNLNAFDIISLSTGLDLSGMFE. The tract at residues 333–362 is PPI; the sequence is KKESKFTSTSTASTIISKIEDIAKGLRLKL.

Belongs to the protein kinase superfamily. CAMK Ser/Thr protein kinase family. SNF1 subfamily. Mn(2+) is required as a cofactor.

It carries out the reaction L-seryl-[protein] + ATP = O-phospho-L-seryl-[protein] + ADP + H(+). It catalyses the reaction L-threonyl-[protein] + ATP = O-phospho-L-threonyl-[protein] + ADP + H(+). In terms of biological role, CIPK serine-threonine protein kinases interact with CBL proteins. Binding of a CBL protein to the regulatory NAF domain of CIPK protein lead to the activation of the kinase in a calcium-dependent manner. This chain is CBL-interacting protein kinase 2 (CIPK2), found in Oryza sativa subsp. japonica (Rice).